The sequence spans 391 residues: S-adenosylmethionine synthase (391 aa).

His14 lines the ATP pocket. Asp16 contributes to the Mg(2+) binding site. Glu42 is a binding site for K(+). L-methionine contacts are provided by Glu55 and Gln98. The tract at residues 98–108 is flexible loop; sequence QSADIAMGVDE. ATP is bound by residues 172-174, 238-239, Asp247, 253-254, Ala270, and Lys274; these read DGK, RF, and RK. Asp247 contacts L-methionine. Lys278 is a binding site for L-methionine.

This sequence belongs to the AdoMet synthase family. In terms of assembly, homotetramer; dimer of dimers. Mg(2+) is required as a cofactor. The cofactor is K(+).

It localises to the cytoplasm. It carries out the reaction L-methionine + ATP + H2O = S-adenosyl-L-methionine + phosphate + diphosphate. The protein operates within amino-acid biosynthesis; S-adenosyl-L-methionine biosynthesis; S-adenosyl-L-methionine from L-methionine: step 1/1. Its function is as follows. Catalyzes the formation of S-adenosylmethionine (AdoMet) from methionine and ATP. The overall synthetic reaction is composed of two sequential steps, AdoMet formation and the subsequent tripolyphosphate hydrolysis which occurs prior to release of AdoMet from the enzyme. The sequence is that of S-adenosylmethionine synthase from Clostridium botulinum (strain Alaska E43 / Type E3).